Consider the following 53-residue polypeptide: uncharacterized protein (53 aa).

Residues 20 to 42 form a helical membrane-spanning segment; sequence ILFPVLLVFDTILIVVGIALILF.

It localises to the membrane. This is an uncharacterized protein from Archaeoglobus fulgidus (strain ATCC 49558 / DSM 4304 / JCM 9628 / NBRC 100126 / VC-16).